Here is a 223-residue protein sequence, read N- to C-terminus: Transmembrane protein 126 (223 aa).

Over 1–39 (MALSRAKPDELPRDAVVITEDQALKYQWKIITSWDKIGE) the chain is Mitochondrial matrix. Residues 40–62 (VWSLRYTPGILSALAAGTGAYIN) traverse the membrane as a helical segment. Topologically, residues 63–78 (NHYRTKLRLGGHGRLS) are mitochondrial intermembrane. Residues 79-99 (TYLPIVAVPAIFTMLAHKFFI) traverse the membrane as a helical segment. Over 100-123 (QRPILLNPLGECPVCIQMRSAAFQ) the chain is Mitochondrial matrix. The chain crosses the membrane as a helical span at residues 124–144 (TSLGIVYPTILAPFAAFLFAT). Over 145–171 (RCYTYRIPSITENPREVFLLWRKFTRP) the chain is Mitochondrial intermembrane. Residues 172 to 192 (IVPALGTLIGLQALLTMFLTG) traverse the membrane as a helical segment. The Mitochondrial matrix segment spans residues 193–223 (QEDKQNFKLMLRMREIEHQVEEEHLPQRMDF).

Belongs to the TMEM126 family. As to quaternary structure, associates with mitochondrial complex I assembly intermediates during its biogenesis.

The protein resides in the mitochondrion membrane. In terms of biological role, as part of the MCIA complex, involved in the assembly of the mitochondrial complex I. In Drosophila melanogaster (Fruit fly), this protein is Transmembrane protein 126.